A 338-amino-acid polypeptide reads, in one-letter code: Ketol-acid reductoisomerase (NADP(+)) (338 aa).

A KARI N-terminal Rossmann domain is found at 1 to 181; it reads MKVFYDKDCD…GGGKAGIIET (181 aa). Residues 24–27, Arg-47, and Ser-52 contribute to the NADP(+) site; that span reads YGSQ. His-107 is an active-site residue. NADP(+) is bound at residue Gly-133. The KARI C-terminal knotted domain maps to 182–327; it reads TFREETETDL…EKLRAMMPWI (146 aa). Mg(2+) contacts are provided by Asp-190, Glu-194, Glu-226, and Glu-230. Ser-251 lines the substrate pocket.

The protein belongs to the ketol-acid reductoisomerase family. Mg(2+) serves as cofactor.

The catalysed reaction is (2R)-2,3-dihydroxy-3-methylbutanoate + NADP(+) = (2S)-2-acetolactate + NADPH + H(+). The enzyme catalyses (2R,3R)-2,3-dihydroxy-3-methylpentanoate + NADP(+) = (S)-2-ethyl-2-hydroxy-3-oxobutanoate + NADPH + H(+). The protein operates within amino-acid biosynthesis; L-isoleucine biosynthesis; L-isoleucine from 2-oxobutanoate: step 2/4. It functions in the pathway amino-acid biosynthesis; L-valine biosynthesis; L-valine from pyruvate: step 2/4. Its function is as follows. Involved in the biosynthesis of branched-chain amino acids (BCAA). Catalyzes an alkyl-migration followed by a ketol-acid reduction of (S)-2-acetolactate (S2AL) to yield (R)-2,3-dihydroxy-isovalerate. In the isomerase reaction, S2AL is rearranged via a Mg-dependent methyl migration to produce 3-hydroxy-3-methyl-2-ketobutyrate (HMKB). In the reductase reaction, this 2-ketoacid undergoes a metal-dependent reduction by NADPH to yield (R)-2,3-dihydroxy-isovalerate. The polypeptide is Ketol-acid reductoisomerase (NADP(+)) (Albidiferax ferrireducens (strain ATCC BAA-621 / DSM 15236 / T118) (Rhodoferax ferrireducens)).